A 379-amino-acid polypeptide reads, in one-letter code: GPN-loop GTPase QQT2 (379 aa).

Methionine 1 carries the N-acetylmethionine modification. 51-56 contributes to the GTP binding site; the sequence is GSGKTS. A Gly-Pro-Asn (GPN)-loop; involved in dimer interface motif is present at residues 108 to 110; that stretch reads GPN. GTP contacts are provided by residues 211–214 and alanine 267; that span reads NKTD. A coiled-coil region spans residues 288 to 322; the sequence is METYKADLDMRKADKERLEEERKKHEMEKLRKDME. Basic and acidic residues-rich tracts occupy residues 303-322 and 335-346; these read ERLEEERKKHEMEKLRKDME and LKDRDATEKMML. The interval 303–379 is disordered; it reads ERLEEERKKH…EDDETKHYYL (77 aa). A compositionally biased stretch (acidic residues) spans 347–372; the sequence is EEDDEDFQVEDEEDSDDAIDEDDEDD.

The protein belongs to the GPN-loop GTPase family. In terms of assembly, heterodimer with QQT1. In terms of tissue distribution, expressed in individual cells of roots, leaves and flowers.

It localises to the cytoplasm. It is found in the nucleus. Its subcellular location is the cytoskeleton. The protein localises to the spindle. The protein resides in the phragmoplast. Its function is as follows. Small GTPase that is essential for the correct formation of the tangential divisions in early embryos. Associates with microtubule during mitosis and may function in the positioning of the division plane. May participate in the patterning of the early embryo at the octant-dermatogen transition. The chain is GPN-loop GTPase QQT2 from Arabidopsis thaliana (Mouse-ear cress).